A 344-amino-acid chain; its full sequence is Arginine N-succinyltransferase (344 aa).

Leu-125 contributes to the succinyl-CoA binding site. His-229 (proton donor) is an active-site residue.

Belongs to the arginine N-succinyltransferase family.

The enzyme catalyses succinyl-CoA + L-arginine = N(2)-succinyl-L-arginine + CoA + H(+). Its pathway is amino-acid degradation; L-arginine degradation via AST pathway; L-glutamate and succinate from L-arginine: step 1/5. In terms of biological role, catalyzes the transfer of succinyl-CoA to arginine to produce N(2)-succinylarginine. In Escherichia coli (strain 55989 / EAEC), this protein is Arginine N-succinyltransferase.